Here is a 496-residue protein sequence, read N- to C-terminus: Probable CtpA-like serine protease (496 aa).

Basic and acidic residues predominate over residues 1 to 16 (MDDKQHTSSSDDERAE). The segment at 1 to 27 (MDDKQHTSSSDDERAEIATSNQDQETN) is disordered. A compositionally biased stretch (polar residues) spans 18–27 (ATSNQDQETN). The helical transmembrane segment at 39–59 (FISILIGTILITAVITVVAYI) threads the bilayer. Residues 124–206 (TKSFNEGVSG…TEVTLTVQRG (83 aa)) form the PDZ domain. Active-site charge relay system residues include Ser-329, Asp-340, and Lys-354.

The protein belongs to the peptidase S41A family.

The protein resides in the cell membrane. This is Probable CtpA-like serine protease from Staphylococcus aureus (strain MSSA476).